The following is a 492-amino-acid chain: 5-taurinomethyluridine-[tRNA] synthase subunit GTPB3, mitochondrial (492 aa).

A mitochondrion-targeting transit peptide spans 1–20 (MWRGLWTLAAQAARGPRRLC). Residues arginine 52, glutamate 112, and lysine 152 each coordinate 5,10-methylenetetrahydrofolate. In terms of domain architecture, TrmE-type G spans 249–416 (GVHVVVTGPP…LLEALRKELA (168 aa)). Residues 256-263 (GPPNAGKS), 282-286 (GTTRD), 303-306 (DTAG), 374-377 (NKSD), and 397-399 (SCL) contribute to the GTP site. Asparagine 259 serves as a coordination point for K(+). Mg(2+) is bound by residues serine 263 and threonine 284. Lysine 492 contributes to the 5,10-methylenetetrahydrofolate binding site.

This sequence belongs to the TRAFAC class TrmE-Era-EngA-EngB-Septin-like GTPase superfamily. TrmE GTPase family. In terms of assembly, homodimer; forms a dimer in the presence of potassium. Interacts with MTO1; forms the GTPBP3-MTO1 complex composed of homodimers of GTPBP3 and MTO1. Homodimer, forms homodimer in vivo. K(+) serves as cofactor. In terms of tissue distribution, ubiquitously expressed.

It localises to the mitochondrion. The protein resides in the cytoplasm. The enzyme catalyses GTP + H2O = GDP + phosphate + H(+). Functionally, GTPase component of the GTPBP3-MTO1 complex that catalyzes the 5-taurinomethyluridine (taum(5)U) modification at the 34th wobble position (U34) of mitochondrial tRNAs (mt-tRNAs), which plays a role in mt-tRNA decoding and mitochondrial translation. Taum(5)U formation on mammalian mt-tRNA requires the presence of both GTPBP3-mediated GTPase activity and MTO1 catalytic activity. In Homo sapiens (Human), this protein is 5-taurinomethyluridine-[tRNA] synthase subunit GTPB3, mitochondrial.